Consider the following 367-residue polypeptide: UDP-N-acetylglucosamine--N-acetylmuramyl-(pentapeptide) pyrophosphoryl-undecaprenol N-acetylglucosamine transferase (367 aa).

UDP-N-acetyl-alpha-D-glucosamine is bound by residues 15–17, N127, R163, S191, I249, and Q294; that span reads TGG.

It belongs to the glycosyltransferase 28 family. MurG subfamily.

Its subcellular location is the cell inner membrane. The enzyme catalyses di-trans,octa-cis-undecaprenyl diphospho-N-acetyl-alpha-D-muramoyl-L-alanyl-D-glutamyl-meso-2,6-diaminopimeloyl-D-alanyl-D-alanine + UDP-N-acetyl-alpha-D-glucosamine = di-trans,octa-cis-undecaprenyl diphospho-[N-acetyl-alpha-D-glucosaminyl-(1-&gt;4)]-N-acetyl-alpha-D-muramoyl-L-alanyl-D-glutamyl-meso-2,6-diaminopimeloyl-D-alanyl-D-alanine + UDP + H(+). Its pathway is cell wall biogenesis; peptidoglycan biosynthesis. In terms of biological role, cell wall formation. Catalyzes the transfer of a GlcNAc subunit on undecaprenyl-pyrophosphoryl-MurNAc-pentapeptide (lipid intermediate I) to form undecaprenyl-pyrophosphoryl-MurNAc-(pentapeptide)GlcNAc (lipid intermediate II). This is UDP-N-acetylglucosamine--N-acetylmuramyl-(pentapeptide) pyrophosphoryl-undecaprenol N-acetylglucosamine transferase from Burkholderia cenocepacia (strain HI2424).